The chain runs to 332 residues: Glycerol-3-phosphate dehydrogenase [NAD(P)+] (332 aa).

S11, F12, K32, and K106 together coordinate NADPH. Residues K106, G137, and S139 each coordinate sn-glycerol 3-phosphate. A141 is a binding site for NADPH. K192, D245, S255, R256, and N257 together coordinate sn-glycerol 3-phosphate. K192 acts as the Proton acceptor in catalysis. An NADPH-binding site is contributed by R256. 2 residues coordinate NADPH: V280 and E282.

It belongs to the NAD-dependent glycerol-3-phosphate dehydrogenase family.

It is found in the cytoplasm. The catalysed reaction is sn-glycerol 3-phosphate + NAD(+) = dihydroxyacetone phosphate + NADH + H(+). It catalyses the reaction sn-glycerol 3-phosphate + NADP(+) = dihydroxyacetone phosphate + NADPH + H(+). The protein operates within membrane lipid metabolism; glycerophospholipid metabolism. In terms of biological role, catalyzes the reduction of the glycolytic intermediate dihydroxyacetone phosphate (DHAP) to sn-glycerol 3-phosphate (G3P), the key precursor for phospholipid synthesis. The protein is Glycerol-3-phosphate dehydrogenase [NAD(P)+] of Staphylococcus aureus (strain USA300).